A 3072-amino-acid polypeptide reads, in one-letter code: Eukaryotic translation initiation factor 2-alpha kinase PK4 (3072 aa).

Residues 1–106 (MCNFIKKGIR…EFRWLINKLE (106 aa)) lie on the Cytoplasmic side of the membrane. A helical membrane pass occupies residues 107-127 (IIYFYFFCHLLLLCIFQNIFL). At 128–1643 (LTYMSKEYFL…FTSIRYKRRR (1516 aa)) the chain is on the lumenal side. Residues 383–402 (KEKCHRDEKCDRGENYDRGE) form a disordered region. Residues 576–610 (KKKILDENDMITIDNNIDKKENILFPYFHMEILKD) are 10 X 7 AA tandem repeat of D-K-N-[GE]-L-D-[GD]. Residues 970 to 1010 (QYEDNNDNDNNKNDNNKNDNNKNDNNKNDNNNNNNNNNNNS) are disordered. Basic and acidic residues predominate over residues 978 to 996 (DNNKNDNNKNDNNKNDNNK). Residues 997-1009 (NDNNNNNNNNNNN) show a composition bias toward low complexity. A helical transmembrane segment spans residues 1644–1664 (WYWRVFYTIMFIIFFPVLFIY). At 1665–3072 (RRIIKRRKGS…IKNENNGADK (1408 aa)) the chain is on the cytoplasmic side. 2 disordered regions span residues 1737-1766 (KNYN…SKSN) and 1917-1937 (KVGS…KDKK). Positions 1738–1766 (NYNNNNNNNNNKNNNNISNNNSNSNSKSN) are enriched in low complexity. Residues 1928 to 1937 (NYTDNEKDKK) show a composition bias toward basic and acidic residues. Residues 2152-2160 (IGQGGFGSV) and Lys2177 each bind ATP. Disordered stretches follow at residues 2316–2402 (FYSD…EGRD), 2479–2558 (RNED…KKLD), and 2691–2749 (ENDD…DDDI). Residues 2326–2335 (KNKENPEKNH) are compositionally biased toward basic and acidic residues. Residues 2362–2384 (HKLKKRKNKKKKSKKKRKSKSKI) show a composition bias toward basic residues. A run of 10 repeats spans residues 2483-2489 (DKNGLDG), 2490-2496 (DKNGLDG), 2497-2503 (DKNGLDG), 2504-2510 (DKNGLDG), 2511-2517 (DKNGLDG), 2518-2524 (DKNELDG), 2525-2531 (DKNGLDG), 2532-2538 (DKNGLDG), 2539-2545 (DKNGLDG), and 2546-2552 (DKNELDD). The region spanning 2627 to 2998 (TNVESINTNG…KIKVLLDPHL (372 aa)) is the Protein kinase domain. The span at 2692-2702 (NDDDDDDDDDN) shows a compositional bias: acidic residues. The active-site Proton acceptor is Asp2835. Position 2902 is a phosphothreonine (Thr2902).

This sequence belongs to the protein kinase superfamily. Ser/Thr protein kinase family. GCN2 subfamily. May form oligomers in response to stress; oligomerization may result in catalytic activity. Interacts with BIP; the interaction is disrupted in response to stress. Post-translationally, auto-phosphorylated.

The protein resides in the endoplasmic reticulum membrane. The catalysed reaction is L-seryl-[protein] + ATP = O-phospho-L-seryl-[protein] + ADP + H(+). It carries out the reaction L-threonyl-[protein] + ATP = O-phospho-L-threonyl-[protein] + ADP + H(+). With respect to regulation, dissociation from BIP and oligomerization, may results autophosphorylation and kinase activity induction. During the asexual blood stage, phosphorylates translation factor eIF2alpha in late schizonts resulting in protein translation inhibition. Plays a role in trophozoite differentiation into schizonts. The protein is Eukaryotic translation initiation factor 2-alpha kinase PK4 of Plasmodium falciparum (isolate 3D7).